Reading from the N-terminus, the 1472-residue chain is ABC multidrug transporter atrI (1472 aa).

Positions 1–28 are disordered; the sequence is MRRSNVVPVHSLTSSTNTGRDSRGEKYD. The ABC transporter 1 domain occupies 134 to 384; the sequence is FRRETWNFRN…FERQGWFCPP (251 aa). Residues N143, N277, N308, and N332 are each glycosylated (N-linked (GlcNAc...) asparagine). Helical transmembrane passes span 506-526, 530-550, 580-600, 605-625, 639-659, 664-684, and 744-764; these read ILAL…AGFY, ATLF…INSL, IPVK…LSGL, SQFF…SAVF, MTLA…VVPV, PWFK…ILIA, and FGIL…ATEL. The segment covering 784-793 has biased composition (basic and acidic residues); the sequence is AHLKNGHEPG. The segment at 784 to 821 is disordered; that stretch reads AHLKNGHEPGADEEAGAGKTVVSSSAEENKQDQGITSI. A compositionally biased stretch (polar residues) spans 804–821; that stretch reads VVSSSAEENKQDQGITSI. Residues 828–1070 form the ABC transporter 2 domain; it reads FTWRDVVYDI…TLLKYFESHG (243 aa). An ATP-binding site is contributed by 864-871; that stretch reads GVSGAGKT. The next 6 helical transmembrane spans lie at 1168–1188, 1204–1224, 1244–1264, 1282–1302, 1309–1329, and 1337–1357; these read YIAA…FSFF, VFML…LFIT, FMIA…ILVF, LVLL…DFVI, ETAG…NGVM, and GFWI…GMAA. N-linked (GlcNAc...) asparagine glycosylation occurs at N1402. A helical transmembrane segment spans residues 1433 to 1453; sequence FGIFWAYVVFDIAVAVMLYYC. N1460 carries an N-linked (GlcNAc...) asparagine glycan.

Belongs to the ABC transporter superfamily. ABCG family. PDR (TC 3.A.1.205) subfamily.

It is found in the cell membrane. It carries out the reaction itraconazole(in) + ATP + H2O = itraconazole(out) + ADP + phosphate + H(+). It catalyses the reaction voriconazole(in) + ATP + H2O = voriconazole(out) + ADP + phosphate + H(+). The enzyme catalyses fluconazole(in) + ATP + H2O = fluconazole(out) + ADP + phosphate + H(+). In terms of biological role, pleiotropic ABC efflux transporter involved in the basal level of azole susceptibility. Confers resistance to fluconazole, itraconazole and voriconazole. The sequence is that of ABC multidrug transporter atrI from Aspergillus fumigatus (strain ATCC MYA-4609 / CBS 101355 / FGSC A1100 / Af293) (Neosartorya fumigata).